Here is a 310-residue protein sequence, read N- to C-terminus: Alpha/beta hydrolase domain-containing protein 17A (310 aa).

Catalysis depends on charge relay system residues Ser-190, Asp-255, and His-284. Phosphoserine is present on Ser-307.

This sequence belongs to the AB hydrolase superfamily. ABHD17 family. In terms of processing, palmitoylated on cysteine residues located in a cysteine cluster at the N-terminus which promotes membrane localization. Palmitoylation is required for post-synaptic localization and for depalmitoylating activity towards DLG4/PSD95.

The protein resides in the cell membrane. Its subcellular location is the endosome membrane. It localises to the cell projection. It is found in the dendritic spine. The protein localises to the postsynaptic density membrane. The catalysed reaction is S-hexadecanoyl-L-cysteinyl-[protein] + H2O = L-cysteinyl-[protein] + hexadecanoate + H(+). Its activity is regulated as follows. Inhibited by palmostatin-B. Functionally, hydrolyzes fatty acids from S-acylated cysteine residues in proteins. Has depalmitoylating activity towards NRAS. Has depalmitoylating activity towards DLG4/PSD95. May have depalmitoylating activity towards MAP6. The polypeptide is Alpha/beta hydrolase domain-containing protein 17A (Homo sapiens (Human)).